The primary structure comprises 160 residues: RNA pyrophosphohydrolase (160 aa).

Residues 10–154 (PYRPCVGVML…KRDVYVAVLD (145 aa)) enclose the Nudix hydrolase domain. The short motif at 44 to 65 (GGVEKGEDPRAAALRELWEETG) is the Nudix box element.

It belongs to the Nudix hydrolase family. RppH subfamily. It depends on a divalent metal cation as a cofactor.

Functionally, accelerates the degradation of transcripts by removing pyrophosphate from the 5'-end of triphosphorylated RNA, leading to a more labile monophosphorylated state that can stimulate subsequent ribonuclease cleavage. In Roseobacter denitrificans (strain ATCC 33942 / OCh 114) (Erythrobacter sp. (strain OCh 114)), this protein is RNA pyrophosphohydrolase.